A 360-amino-acid polypeptide reads, in one-letter code: Phosphoserine aminotransferase (360 aa).

Arginine 41 lines the L-glutamate pocket. Residues tryptophan 101, threonine 152, aspartate 172, and glutamine 195 each coordinate pyridoxal 5'-phosphate. The residue at position 196 (lysine 196) is an N6-(pyridoxal phosphate)lysine. 237 to 238 is a binding site for pyridoxal 5'-phosphate; sequence NT.

Belongs to the class-V pyridoxal-phosphate-dependent aminotransferase family. SerC subfamily. As to quaternary structure, homodimer. The cofactor is pyridoxal 5'-phosphate.

The protein resides in the cytoplasm. The catalysed reaction is O-phospho-L-serine + 2-oxoglutarate = 3-phosphooxypyruvate + L-glutamate. It catalyses the reaction 4-(phosphooxy)-L-threonine + 2-oxoglutarate = (R)-3-hydroxy-2-oxo-4-phosphooxybutanoate + L-glutamate. It functions in the pathway amino-acid biosynthesis; L-serine biosynthesis; L-serine from 3-phospho-D-glycerate: step 2/3. The protein operates within cofactor biosynthesis; pyridoxine 5'-phosphate biosynthesis; pyridoxine 5'-phosphate from D-erythrose 4-phosphate: step 3/5. Its function is as follows. Catalyzes the reversible conversion of 3-phosphohydroxypyruvate to phosphoserine and of 3-hydroxy-2-oxo-4-phosphonooxybutanoate to phosphohydroxythreonine. This is Phosphoserine aminotransferase from Burkholderia multivorans (strain ATCC 17616 / 249).